The chain runs to 281 residues: Bis(5'-nucleosyl)-tetraphosphatase, symmetrical (281 aa).

The protein belongs to the Ap4A hydrolase family.

The catalysed reaction is P(1),P(4)-bis(5'-adenosyl) tetraphosphate + H2O = 2 ADP + 2 H(+). Its function is as follows. Hydrolyzes diadenosine 5',5'''-P1,P4-tetraphosphate to yield ADP. The polypeptide is Bis(5'-nucleosyl)-tetraphosphatase, symmetrical (Acidovorax sp. (strain JS42)).